A 797-amino-acid polypeptide reads, in one-letter code: Protein tamozhennic (797 aa).

One can recognise a PUB domain in the interval Q79 to G146. 2 disordered regions span residues A515 to L570 and L638 to V697. Over residues E662–K679 the composition is skewed to basic and acidic residues. The segment at I735–D766 adopts a RanBP2-type zinc-finger fold.

Homomultimer. Binds to dl and msl-1 via their nuclear localization signal (NLS). Also binds to Ran, Ran-like and mbo.

Its subcellular location is the cytoplasm. In terms of biological role, has an essential role during oogenesis and embryogenesis, perhaps in modulating the levels of nuclear import of additional proteins. Modulates the nuclear import of dorsal (dl), Dif and male specific lethal 1 (msl-1). Negatively regulates nuclear import of dl and controls the accumulation of dl in the nucleus after immune challenge. The polypeptide is Protein tamozhennic (tamo) (Drosophila melanogaster (Fruit fly)).